We begin with the raw amino-acid sequence, 585 residues long: Arginine--tRNA ligase (585 aa).

The 'HIGH' region signature appears at 131–141; the sequence is ANPTGPMHVGH.

This sequence belongs to the class-I aminoacyl-tRNA synthetase family. In terms of assembly, monomer.

Its subcellular location is the cytoplasm. It catalyses the reaction tRNA(Arg) + L-arginine + ATP = L-arginyl-tRNA(Arg) + AMP + diphosphate. This is Arginine--tRNA ligase from Brucella anthropi (strain ATCC 49188 / DSM 6882 / CCUG 24695 / JCM 21032 / LMG 3331 / NBRC 15819 / NCTC 12168 / Alc 37) (Ochrobactrum anthropi).